The sequence spans 198 residues: Holliday junction branch migration complex subunit RuvA (198 aa).

Residues 1–63 (MYDYIKGQLT…EDAHLLFGFH (63 aa)) are domain I. The interval 64–142 (TEDEKDVFLK…EAPQETGNTK (79 aa)) is domain II. A flexible linker region spans residues 143-147 (ARSNK). The interval 148–198 (AGNTQLDEAIEALLALGYKAAELKKIRAFFEGTSETAEQYIKSALKLLMKG) is domain III.

Belongs to the RuvA family. As to quaternary structure, homotetramer. Forms an RuvA(8)-RuvB(12)-Holliday junction (HJ) complex. HJ DNA is sandwiched between 2 RuvA tetramers; dsDNA enters through RuvA and exits via RuvB. An RuvB hexamer assembles on each DNA strand where it exits the tetramer. Each RuvB hexamer is contacted by two RuvA subunits (via domain III) on 2 adjacent RuvB subunits; this complex drives branch migration. In the full resolvosome a probable DNA-RuvA(4)-RuvB(12)-RuvC(2) complex forms which resolves the HJ.

Its subcellular location is the cytoplasm. Functionally, the RuvA-RuvB-RuvC complex processes Holliday junction (HJ) DNA during genetic recombination and DNA repair, while the RuvA-RuvB complex plays an important role in the rescue of blocked DNA replication forks via replication fork reversal (RFR). RuvA specifically binds to HJ cruciform DNA, conferring on it an open structure. The RuvB hexamer acts as an ATP-dependent pump, pulling dsDNA into and through the RuvAB complex. HJ branch migration allows RuvC to scan DNA until it finds its consensus sequence, where it cleaves and resolves the cruciform DNA. This chain is Holliday junction branch migration complex subunit RuvA, found in Streptococcus pyogenes serotype M28 (strain MGAS6180).